The primary structure comprises 477 residues: MKHAIHHIHFVGIGGAGMSGIAEVLHNLGYAISGSDLSDSATLRRLAGLGIATHVGHAAAHIEGADAVVTSTAVQSDNPEVLAARERKIPVVPRALMLAELMRFKQGIAIAGAHGKTTTTSLVTSVLAEAGLDPTFVIGGKLNSAGANAKLGQGDYIVVEADESDASFLNLLPVMAVVTNIDADHMETYGHDFGRLKGAFVDFLHRMPFYGRAIVCVDSPAVREILPQVARPVTTYGFAEDAQVRALNVRAEAGSMHFTVRRSNGQSYPDLDVVLSLPGEHNVLNALSAVAVAMELEISDDALLRAFESFKGVGRRFQRYGELAAADGGSFTVIDDYGHHPVEMAATLAAARGAFPGRRLVLAFQPHRYSRTRDCFEDFVKVIGLADAVLLTEVYAAGEAPVVAADGRSLARALRVAGRVEPVFVENVAELPAAIAVNARDGDVLLCMGAGSIGAVPGKLVEMLQKQELQAQQGAAQ.

112 to 118 serves as a coordination point for ATP; it reads GAHGKTT.

It belongs to the MurCDEF family.

Its subcellular location is the cytoplasm. It catalyses the reaction UDP-N-acetyl-alpha-D-muramate + L-alanine + ATP = UDP-N-acetyl-alpha-D-muramoyl-L-alanine + ADP + phosphate + H(+). It participates in cell wall biogenesis; peptidoglycan biosynthesis. In terms of biological role, cell wall formation. The sequence is that of UDP-N-acetylmuramate--L-alanine ligase from Delftia acidovorans (strain DSM 14801 / SPH-1).